Reading from the N-terminus, the 442-residue chain is tRNA-2-methylthio-N(6)-dimethylallyladenosine synthase (442 aa).

One can recognise an MTTase N-terminal domain in the interval Lys2–Thr120. [4Fe-4S] cluster is bound by residues Cys11, Cys49, Cys83, Cys157, Cys161, and Cys164. The 233-residue stretch at Arg143 to Arg375 folds into the Radical SAM core domain. The TRAM domain occupies Gln378–Glu441.

Belongs to the methylthiotransferase family. MiaB subfamily. As to quaternary structure, monomer. [4Fe-4S] cluster serves as cofactor.

Its subcellular location is the cytoplasm. It carries out the reaction N(6)-dimethylallyladenosine(37) in tRNA + (sulfur carrier)-SH + AH2 + 2 S-adenosyl-L-methionine = 2-methylsulfanyl-N(6)-dimethylallyladenosine(37) in tRNA + (sulfur carrier)-H + 5'-deoxyadenosine + L-methionine + A + S-adenosyl-L-homocysteine + 2 H(+). Its function is as follows. Catalyzes the methylthiolation of N6-(dimethylallyl)adenosine (i(6)A), leading to the formation of 2-methylthio-N6-(dimethylallyl)adenosine (ms(2)i(6)A) at position 37 in tRNAs that read codons beginning with uridine. This Neisseria meningitidis serogroup C (strain 053442) protein is tRNA-2-methylthio-N(6)-dimethylallyladenosine synthase.